The primary structure comprises 372 residues: MAPAPPPAASFTPAEVQRRLAAGACWVRRGASLYDLTSFVRHHPGGEQLLLARAGQDISADLDGPPHRHSDNARRWLEQYYVGELRADPQDPTENGAVASAETQKTDPALEPQFKVVDWDKDLVDWQKPLLWQVGHLGEKYDEWVHQPVARPIRLFHSDLIEAFSKTVWYSVPIIWVPLVLYLSWSYYRTLTQDNIRLFASLTREYSMMMPESVFIGLFVLGMLFWTFVEYVIHRFLFHMKPPSNSHYLIMLHFVMHGQHHKAPFDGSRLVFPPVPASLVIAFFYVFLRLILPETVGGIIFAGGLLGYVLYDMTHYYLHFGSPHKGSYLYNMKAHHVKHHFEYQKSGFGISTKLWDYFFHTLIPEEAHPKMQ.

The Cytochrome b5 heme-binding domain occupies 8 to 86 (AASFTPAEVQ…LEQYYVGELR (79 aa)). Residues histidine 43 and histidine 69 each coordinate heme. The next 2 membrane-spanning stretches (helical) occupy residues 168 to 188 (VWYSVPIIWVPLVLYLSWSYY) and 213 to 233 (SVFIGLFVLGMLFWTFVEYVI). The region spanning 219–361 (FVLGMLFWTF…TKLWDYFFHT (143 aa)) is the Fatty acid hydroxylase domain. The Zn(2+) site is built by histidine 234, histidine 239, histidine 257, histidine 260, and histidine 261. The next 2 helical transmembrane spans lie at 268–288 (SRLVFPPVPASLVIAFFYVFL) and 290–310 (LILPETVGGIIFAGGLLGYVL). Zn(2+) is bound by residues histidine 315, histidine 319, histidine 336, histidine 339, and histidine 340.

The protein belongs to the sterol desaturase family. SCS7 subfamily. Zn(2+) is required as a cofactor. Expressed in brain (at protein level). Detected in cerebellum and forebrain. Expression in the white matter is mainly restricted in oligodendrocytes. Expressed in stomach, kidney, skin and testis. Expressed in sebaceous gland.

The protein localises to the endoplasmic reticulum membrane. It localises to the microsome membrane. It carries out the reaction a 1,2-saturated fatty acid + 2 Fe(II)-[cytochrome b5] + O2 + 2 H(+) = a (R)-2-hydroxy fatty acid + 2 Fe(III)-[cytochrome b5] + H2O. The catalysed reaction is hexadecanoate + 2 Fe(II)-[cytochrome b5] + O2 + 2 H(+) = (R)-2-hydroxyhexadecanoate + 2 Fe(III)-[cytochrome b5] + H2O. It catalyses the reaction octadecanoate + 2 Fe(II)-[cytochrome b5] + O2 + 2 H(+) = (R)-2-hydroxyoctadecanoate + 2 Fe(III)-[cytochrome b5] + H2O. The enzyme catalyses docosanoate + 2 Fe(II)-[cytochrome b5] + O2 + 2 H(+) = 2-hydroxydocosanoate + 2 Fe(III)-[cytochrome b5] + H2O. It carries out the reaction tetracosanoate + 2 Fe(II)-[cytochrome b5] + O2 + 2 H(+) = (R)-2-hydroxytetracosanoate + 2 Fe(III)-[cytochrome b5] + H2O. Its pathway is sphingolipid metabolism; galactosylceramide biosynthesis. It participates in lipid metabolism; fatty acid metabolism. In terms of biological role, catalyzes the hydroxylation of free fatty acids at the C-2 position to produce 2-hydroxy fatty acids, which are building blocks of sphingolipids and glycosphingolipids common in neural tissue and epidermis. FA2H is stereospecific for the production of (R)-2-hydroxy fatty acids. Plays an essential role in the synthesis of galactosphingolipids of the myelin sheath. Responsible for the synthesis of sphingolipids and glycosphingolipids involved in the formation of epidermal lamellar bodies critical for skin permeability barrier. Participates in the synthesis of glycosphingolipids and a fraction of type II wax diesters in sebaceous gland, specifically regulating hair follicle homeostasis. Involved in the synthesis of sphingolipids of plasma membrane rafts, controlling lipid raft mobility and trafficking of raft-associated proteins. The protein is Fatty acid 2-hydroxylase of Mus musculus (Mouse).